The following is a 133-amino-acid chain: Small ribosomal subunit protein bS6 (133 aa).

Residues 93–133 (KTAVTEPSPMMKEEPRRERRDDSAPRQERAEKKTETTEDNA) form a disordered region. Over residues 103–133 (MKEEPRRERRDDSAPRQERAEKKTETTEDNA) the composition is skewed to basic and acidic residues.

It belongs to the bacterial ribosomal protein bS6 family.

Functionally, binds together with bS18 to 16S ribosomal RNA. In Alteromonas mediterranea (strain DSM 17117 / CIP 110805 / LMG 28347 / Deep ecotype), this protein is Small ribosomal subunit protein bS6.